The following is a 379-amino-acid chain: Cobalt-precorrin-5B C(1)-methyltransferase (379 aa).

This sequence belongs to the CbiD family.

The enzyme catalyses Co-precorrin-5B + S-adenosyl-L-methionine = Co-precorrin-6A + S-adenosyl-L-homocysteine. It functions in the pathway cofactor biosynthesis; adenosylcobalamin biosynthesis; cob(II)yrinate a,c-diamide from sirohydrochlorin (anaerobic route): step 6/10. In terms of biological role, catalyzes the methylation of C-1 in cobalt-precorrin-5B to form cobalt-precorrin-6A. This Salmonella typhi protein is Cobalt-precorrin-5B C(1)-methyltransferase.